A 270-amino-acid chain; its full sequence is Transcription factor bHLH113 (270 aa).

The interval 109–153 is disordered; sequence CTVDKSTKSSTKKRTGTGNGQESDQNRKPGKKGKRNQEKSSVGIA. In terms of domain architecture, bHLH spans 144 to 193; the sequence is NQEKSSVGIAKVRKERLGERIAALQQLVSPYGKTDAASVLHEAMGYIKFL.

In terms of assembly, homodimer.

The protein localises to the nucleus. The protein is Transcription factor bHLH113 (BHLH113) of Arabidopsis thaliana (Mouse-ear cress).